Consider the following 209-residue polypeptide: Molybdenum cofactor guanylyltransferase (209 aa).

GTP is bound by residues 13–15 (LAG), K26, N54, D74, and D104. D104 contacts Mg(2+).

This sequence belongs to the MobA family. Monomer. The cofactor is Mg(2+).

It is found in the cytoplasm. It carries out the reaction Mo-molybdopterin + GTP + H(+) = Mo-molybdopterin guanine dinucleotide + diphosphate. Functionally, transfers a GMP moiety from GTP to Mo-molybdopterin (Mo-MPT) cofactor (Moco or molybdenum cofactor) to form Mo-molybdopterin guanine dinucleotide (Mo-MGD) cofactor. This is Molybdenum cofactor guanylyltransferase from Acinetobacter baumannii (strain ACICU).